The sequence spans 406 residues: Cysteine desulfurase (406 aa).

Residue Lys-226 is modified to N6-(pyridoxal phosphate)lysine. Residue Cys-364 is the Cysteine persulfide intermediate of the active site.

Belongs to the class-V pyridoxal-phosphate-dependent aminotransferase family. Csd subfamily. Homodimer. Interacts with SufE and the SufBCD complex composed of SufB, SufC and SufD. The interaction with SufE is required to mediate the direct transfer of the sulfur atom from the S-sulfanylcysteine. It depends on pyridoxal 5'-phosphate as a cofactor.

Its subcellular location is the cytoplasm. It catalyses the reaction (sulfur carrier)-H + L-cysteine = (sulfur carrier)-SH + L-alanine. It carries out the reaction L-selenocysteine + AH2 = hydrogenselenide + L-alanine + A + H(+). The protein operates within cofactor biosynthesis; iron-sulfur cluster biosynthesis. In terms of biological role, cysteine desulfurases mobilize the sulfur from L-cysteine to yield L-alanine, an essential step in sulfur metabolism for biosynthesis of a variety of sulfur-containing biomolecules. Component of the suf operon, which is activated and required under specific conditions such as oxidative stress and iron limitation. Acts as a potent selenocysteine lyase in vitro, that mobilizes selenium from L-selenocysteine. Selenocysteine lyase activity is however unsure in vivo. The sequence is that of Cysteine desulfurase from Salmonella heidelberg (strain SL476).